Consider the following 126-residue polypeptide: MAIIGLGTDIVEISRIEAVVERSGEKLARRILSPAEWQHYQQHQQPIRFLAKRFAVKEAAAKAFGTGIRNGLAFNQFEVVNDALGKPTLRLHQRAAELAAELGVKSLHVTLADERRYACATVIIES.

Mg(2+) is bound by residues Asp-9 and Glu-58.

Belongs to the P-Pant transferase superfamily. AcpS family. It depends on Mg(2+) as a cofactor.

Its subcellular location is the cytoplasm. The catalysed reaction is apo-[ACP] + CoA = holo-[ACP] + adenosine 3',5'-bisphosphate + H(+). Its function is as follows. Transfers the 4'-phosphopantetheine moiety from coenzyme A to a Ser of acyl-carrier-protein. This Yersinia enterocolitica serotype O:8 / biotype 1B (strain NCTC 13174 / 8081) protein is Holo-[acyl-carrier-protein] synthase.